Here is a 224-residue protein sequence, read N- to C-terminus: UPF0758 protein Mmwyl1_0624 (224 aa).

The MPN domain maps to 102 to 224 (VFASAEHVRT…PVSLAERGLV (123 aa)). Zn(2+) is bound by residues histidine 173, histidine 175, and aspartate 186. The JAMM motif motif lies at 173-186 (HNHPSGIAEPSQAD).

The protein belongs to the UPF0758 family.

This chain is UPF0758 protein Mmwyl1_0624, found in Marinomonas sp. (strain MWYL1).